The following is a 471-amino-acid chain: Phosphatidylserine synthase 2 (471 aa).

The segment at 1–26 (MRRGERRVAGGSGSESPLLEGRRSTE) is disordered. The Cytoplasmic portion of the chain corresponds to 1 to 40 (MRRGERRVAGGSGSESPLLEGRRSTESEVYDDGTNTFFWR). Phosphoserine occurs at positions 12, 14, and 16. Residues 41-61 (AHTLTVLFILTCALGYVTLLE) traverse the membrane as a helical segment. Residues 62-74 (ETPQDTAYNTKRG) are Lumenal-facing. Residues 75 to 95 (IVASILVFLCFGVTQAKDGPF) form a helical membrane-spanning segment. Residues 96 to 104 (SRPHPAYWR) are Cytoplasmic-facing. A helical transmembrane segment spans residues 105 to 125 (FWLCVSVVYELFLIFILFQTV). The Lumenal segment spans residues 126–291 (HDGRQFLKYV…EWKPASSLHR (166 aa)). N-linked (GlcNAc...) asparagine glycosylation is present at asparagine 159. The chain crosses the membrane as a helical span at residues 292 to 312 (WLAVCGIILVFLLAELNTFYL). A topological domain (cytoplasmic) is located at residue lysine 313. The helical transmembrane segment at 314–334 (FVLWMPPEHYLVLLRLVFFVN) threads the bilayer. At 335-354 (VGGVAMREIYDFMDELKPHR) the chain is on the lumenal side. A helical membrane pass occupies residues 355 to 375 (KLGQQAWLVAAITVTELLIVV). Residues 376–381 (KYDPHT) are Cytoplasmic-facing. Residues 382–402 (LTLSLPFYISQCWTLGSILVL) form a helical membrane-spanning segment. Residues 403–471 (TWTVWRFFLR…PAEEGPSAAS (69 aa)) lie on the Lumenal side of the membrane. The disordered stretch occupies residues 423–471 (RQKQQSHQAINNGDGHPGPEDDLPGTGTAEEEGTTNDGVPAEEGPSAAS).

It belongs to the phosphatidyl serine synthase family.

Its subcellular location is the endoplasmic reticulum membrane. The catalysed reaction is a 1,2-diacyl-sn-glycero-3-phosphoethanolamine + L-serine = a 1,2-diacyl-sn-glycero-3-phospho-L-serine + ethanolamine. It carries out the reaction 1-hexadecanoyl-2-(9Z-octadecenoyl)-sn-glycero-3-phosphoethanolamine + L-serine = 1-hexadecanoyl-2-(9Z-octadecenoyl)-sn-glycero-3-phospho-L-serine + ethanolamine. The enzyme catalyses 1-hexadecanoyl-2-(4Z,7Z,10Z,13Z,16Z,19Z-docosahexaenoyl)-sn-glycero-3-phosphoethanolamine + L-serine = 1-hexadecanoyl-2-(4Z,7Z,10Z,13Z,16Z,19Z-docosahexaenoyl)-sn-glycero-3-phosphoserine + ethanolamine. It catalyses the reaction 1-octadecanoyl-2-(5Z,8Z,11Z,14Z)-eicosatetraenoyl-sn-glycero-3-phosphoethanolamine + L-serine = 1-octadecanoyl-2-(5Z,8Z,11Z,14Z)-eicosatetraenoyl-sn-glycero-3-phosphoserine + ethanolamine. The catalysed reaction is 1-octadecanoyl-2-(4Z,7Z,10Z,13Z,16Z,19Z-docosahexaenoyl)-sn-glycero-3-phosphoethanolamine + L-serine = 1-octadecanoyl-2-(4Z,7Z,10Z,13Z,16Z,19Z-docosahexaenoyl)-sn-glycero-3-phosphoserine + ethanolamine. It carries out the reaction 1-(1Z-octadecenyl)-2-(4Z,7Z,10Z,13Z,16Z,19Z-docosahexaenoyl)-sn-glycero-3-phosphoethanolamine + L-serine = 1-(1Z-octadecenyl)-2-(4Z,7Z,10Z,13Z,16Z,19Z-docosahexaenoyl)-sn-glycero-3-phospho-L-serine + ethanolamine. The enzyme catalyses 1-octadecanoyl-2-(9Z-octadecenoyl)-sn-glycero-3-phosphoethanolamine + L-serine = 1-octadecanoyl-2-(9Z-octadecenoyl)-sn-glycero-3-phospho-L-serine + ethanolamine. It catalyses the reaction 1-(1Z-octadecenyl)-2-(9Z-octadecenoyl)-sn-glycero-3-phosphoethanolamine + L-serine = 1-(1Z-octadecenyl)-2-(9Z-octadecenoyl)-sn-glycero-3-phospho-L-serine + ethanolamine. The catalysed reaction is 1-(1Z-octadecenyl)-2-(5Z,8Z,11Z,14Z- eicosatetraenoyl)-sn-glycero-3-phosphoethanolamine + L-serine = 1-(1Z-octadecenyl)-2-(5Z,8Z,11Z,14Z-eicosatetraenoyl)-sn-glycero-3-phospho-L-serine + ethanolamine. The protein operates within phospholipid metabolism; phosphatidylserine biosynthesis. Functionally, catalyzes a base-exchange reaction in which the polar head group of phosphatidylethanolamine (PE) or phosphatidylcholine (PC) is replaced by L-serine. Catalyzes the conversion of phosphatatidylethanolamine and does not act on phosphatidylcholine. Can utilize both phosphatidylethanolamine (PE) plasmalogen and diacyl PE as substrate and the latter is six times better utilized, indicating the importance of an ester linkage at the sn-1 position. Although it shows no sn-1 fatty acyl preference, exhibits significant preference towards docosahexaenoic acid (22:6n-3) compared with 18:1 or 20:4 at the sn-2 position. The sequence is that of Phosphatidylserine synthase 2 (Ptdss2) from Rattus norvegicus (Rat).